The chain runs to 499 residues: Probable cytosol aminopeptidase (499 aa).

K262 and D267 together coordinate Mn(2+). The active site involves K274. Residues D285, D344, and E346 each contribute to the Mn(2+) site. Residue R348 is part of the active site.

Belongs to the peptidase M17 family. Mn(2+) is required as a cofactor.

The protein resides in the cytoplasm. The enzyme catalyses Release of an N-terminal amino acid, Xaa-|-Yaa-, in which Xaa is preferably Leu, but may be other amino acids including Pro although not Arg or Lys, and Yaa may be Pro. Amino acid amides and methyl esters are also readily hydrolyzed, but rates on arylamides are exceedingly low.. It carries out the reaction Release of an N-terminal amino acid, preferentially leucine, but not glutamic or aspartic acids.. Its function is as follows. Presumably involved in the processing and regular turnover of intracellular proteins. Catalyzes the removal of unsubstituted N-terminal amino acids from various peptides. The chain is Probable cytosol aminopeptidase from Protochlamydia amoebophila (strain UWE25).